We begin with the raw amino-acid sequence, 336 residues long: Glyceraldehyde-3-phosphate dehydrogenase 1 (336 aa).

NAD(+)-binding positions include 12 to 13 (RI), Asp-34, and Arg-79. Residues 149–151 (SCT), Thr-180, 209–210 (TG), and Arg-232 contribute to the D-glyceraldehyde 3-phosphate site. Cys-150 functions as the Nucleophile in the catalytic mechanism. Position 314 (Asn-314) interacts with NAD(+).

It belongs to the glyceraldehyde-3-phosphate dehydrogenase family. In terms of assembly, homotetramer.

It localises to the cytoplasm. It catalyses the reaction D-glyceraldehyde 3-phosphate + phosphate + NAD(+) = (2R)-3-phospho-glyceroyl phosphate + NADH + H(+). It participates in carbohydrate degradation; glycolysis; pyruvate from D-glyceraldehyde 3-phosphate: step 1/5. Its activity is regulated as follows. Inhibited by koningic acid through the interaction of cysteine residues with koningic acid even at very low concentrations. The protein is Glyceraldehyde-3-phosphate dehydrogenase 1 (gpd1) of Trichoderma koningii (Hypocrea koningii).